A 425-amino-acid chain; its full sequence is Glutamyl-tRNA(Gln) amidotransferase subunit A (425 aa).

Catalysis depends on charge relay system residues Lys29 and Ser104. The Acyl-ester intermediate role is filled by Ser128.

This sequence belongs to the amidase family. GatA subfamily. Heterotrimer of A, B and C subunits.

The catalysed reaction is L-glutamyl-tRNA(Gln) + L-glutamine + ATP + H2O = L-glutaminyl-tRNA(Gln) + L-glutamate + ADP + phosphate + H(+). Allows the formation of correctly charged Gln-tRNA(Gln) through the transamidation of misacylated Glu-tRNA(Gln) in organisms which lack glutaminyl-tRNA synthetase. The reaction takes place in the presence of glutamine and ATP through an activated gamma-phospho-Glu-tRNA(Gln). This Haloarcula marismortui (strain ATCC 43049 / DSM 3752 / JCM 8966 / VKM B-1809) (Halobacterium marismortui) protein is Glutamyl-tRNA(Gln) amidotransferase subunit A.